The primary structure comprises 656 residues: Rab proteins geranylgeranyltransferase component A 2 (656 aa).

Disordered regions lie at residues 188 to 209 (MHTV…EDKA) and 609 to 656 (PPPN…HLQN). The span at 639–656 (ESSEESKNLESPEKHLQN) shows a compositional bias: basic and acidic residues. Ser-649 carries the phosphoserine modification.

Belongs to the Rab GDI family. In terms of assembly, monomer. Heterotrimer composed of RABGGTA, RABGGTB and CHML; within this trimer, RABGGTA and RABGGTB form the catalytic component B, while CHML (component A) mediates Rab protein binding. Interacts with RAB1A, RAB7A and RAB27A, but has much lower affinity for RAB1A, RAB7A and RAB27A than CHM. Interacts with the non-phosphorylated forms of RAB3A, RAB3B, RAB3C, RAB3D, RAB5B, RAB5C, RAB8A, RAB8B, RAB10, RAB12, RAB35, and RAB43.

It is found in the cytoplasm. The protein resides in the cytosol. Its function is as follows. Substrate-binding subunit (component A) of the Rab geranylgeranyltransferase (GGTase) complex. Binds unprenylated Rab proteins and presents the substrate peptide to the catalytic component B. The component A is thought to be regenerated by transferring its prenylated Rab back to the donor membrane. Less effective than CHM in supporting prenylation of Rab3 family. The protein is Rab proteins geranylgeranyltransferase component A 2 (CHML) of Homo sapiens (Human).